The primary structure comprises 244 residues: Ribosome maturation factor RimM (244 aa).

The disordered stretch occupies residues 1–58 (MSERDSGSSGPVKAKAAAPRAKTSGQAPFGAFVRKPVEKTEGKAKANAANAGSGATEM). Low complexity predominate over residues 13–22 (KAKAAAPRAK). Over residues 35 to 44 (KPVEKTEGKA) the composition is skewed to basic and acidic residues. The segment covering 45 to 57 (KANAANAGSGATE) has biased composition (low complexity). Positions 163–244 (ADEFYWVDLL…QITVDWEADY (82 aa)) constitute a PRC barrel domain.

It belongs to the RimM family. As to quaternary structure, binds ribosomal protein uS19.

The protein resides in the cytoplasm. In terms of biological role, an accessory protein needed during the final step in the assembly of 30S ribosomal subunit, possibly for assembly of the head region. Essential for efficient processing of 16S rRNA. May be needed both before and after RbfA during the maturation of 16S rRNA. It has affinity for free ribosomal 30S subunits but not for 70S ribosomes. The sequence is that of Ribosome maturation factor RimM from Paraburkholderia xenovorans (strain LB400).